Here is a 281-residue protein sequence, read N- to C-terminus: Phosphonates import ATP-binding protein PhnC (281 aa).

Residues 5–253 (IEVCGLTKSF…MLRDLYGTEA (249 aa)) enclose the ABC transporter domain. An ATP-binding site is contributed by 38-45 (GASGSGKS).

It belongs to the ABC transporter superfamily. Phosphonates importer (TC 3.A.1.9.1) family. The complex is composed of two ATP-binding proteins (PhnC), two transmembrane proteins (PhnE) and a solute-binding protein (PhnD).

It localises to the cell inner membrane. The enzyme catalyses phosphonate(out) + ATP + H2O = phosphonate(in) + ADP + phosphate + H(+). Its function is as follows. Part of the ABC transporter complex PhnCDE involved in phosphonates import. Responsible for energy coupling to the transport system. The chain is Phosphonates import ATP-binding protein PhnC from Cupriavidus pinatubonensis (strain JMP 134 / LMG 1197) (Cupriavidus necator (strain JMP 134)).